The sequence spans 224 residues: LexA repressor (224 aa).

The segment at residues 29 to 49 is a DNA-binding region (H-T-H motif); sequence RAEIARALGFRSPNAAEDHLK. Active-site for autocatalytic cleavage activity residues include Ser142 and Lys179.

The protein belongs to the peptidase S24 family. As to quaternary structure, homodimer.

The enzyme catalyses Hydrolysis of Ala-|-Gly bond in repressor LexA.. Represses a number of genes involved in the response to DNA damage (SOS response), including recA and lexA. In the presence of single-stranded DNA, RecA interacts with LexA causing an autocatalytic cleavage which disrupts the DNA-binding part of LexA, leading to derepression of the SOS regulon and eventually DNA repair. The protein is LexA repressor of Bordetella petrii (strain ATCC BAA-461 / DSM 12804 / CCUG 43448).